Here is a 136-residue protein sequence, read N- to C-terminus: Histone H3.1 (136 aa).

A disordered region spans residues Met1–Arg43. Arg3 is subject to Asymmetric dimethylarginine; by PRMT6; alternate. Arg3 is subject to Citrulline; alternate. Thr4 carries the post-translational modification Phosphothreonine; by HASPIN and VRK1. Lys5 carries the allysine; alternate modification. At Lys5 the chain carries N6,N6,N6-trimethyllysine; alternate. Residue Lys5 is modified to N6,N6-dimethyllysine; alternate. Lys5 carries the N6-(2-hydroxyisobutyryl)lysine; alternate modification. Lys5 carries the N6-(beta-hydroxybutyryl)lysine; alternate modification. Position 5 is an N6-acetyllysine; alternate (Lys5). Lys5 carries the N6-crotonyllysine; alternate modification. At Lys5 the chain carries N6-methyllysine; alternate. Residue Gln6 is modified to 5-glutamyl dopamine; alternate. Gln6 bears the 5-glutamyl serotonin; alternate mark. Thr7 carries the phosphothreonine; by PKC modification. At Arg9 the chain carries Citrulline; alternate. A Symmetric dimethylarginine; by PRMT5; alternate modification is found at Arg9. Residue Lys10 is modified to N6,N6,N6-trimethyllysine; alternate. Lys10 is subject to N6,N6-dimethyllysine; alternate. Residue Lys10 is modified to N6-(2-hydroxyisobutyryl)lysine; alternate. An N6-(beta-hydroxybutyryl)lysine; alternate modification is found at Lys10. The residue at position 10 (Lys10) is an N6-acetyllysine; alternate. N6-crotonyllysine; alternate is present on Lys10. An N6-methyllysine; alternate modification is found at Lys10. Lys10 carries the post-translational modification N6-butyryllysine; alternate. An N6-lactoyllysine; alternate modification is found at Lys10. ADP-ribosylserine; alternate is present on Ser11. Position 11 is a phosphoserine; alternate; by AURKB, AURKC, RPS6KA3, RPS6KA4 and RPS6KA5 (Ser11). The residue at position 12 (Thr12) is a Phosphothreonine; by PKC and CHEK1. Lys15 bears the N6-(2-hydroxyisobutyryl)lysine; alternate mark. An N6-(beta-hydroxybutyryl)lysine; alternate modification is found at Lys15. The residue at position 15 (Lys15) is an N6-acetyllysine; alternate. Lys15 bears the N6-lactoyllysine; alternate mark. Lys15 is subject to N6-glutaryllysine; alternate. At Lys15 the chain carries N6-succinyllysine; alternate. Position 18 is a citrulline; alternate (Arg18). Arg18 carries the post-translational modification Asymmetric dimethylarginine; by CARM1; alternate. N6-(2-hydroxyisobutyryl)lysine; alternate occurs at positions 19 and 24. Lys19 and Lys24 each carry N6-(beta-hydroxybutyryl)lysine; alternate. N6-acetyllysine; alternate is present on residues Lys19 and Lys24. 2 positions are modified to N6-crotonyllysine; alternate: Lys19 and Lys24. Residues Lys19 and Lys24 each carry the N6-methyllysine; alternate modification. Lys19 and Lys24 each carry N6-butyryllysine; alternate. Residues Lys19 and Lys24 each carry the N6-lactoyllysine; alternate modification. Residues Lys19 and Lys24 each carry the N6-glutaryllysine; alternate modification. Lys19 is lipidated: N6-decanoyllysine. Arg27 is subject to Citrulline. At Lys28 the chain carries N6,N6,N6-trimethyllysine; alternate. An N6,N6-dimethyllysine; alternate modification is found at Lys28. Position 28 is an N6-(2-hydroxyisobutyryl)lysine; alternate (Lys28). Lys28 carries the N6-(beta-hydroxybutyryl)lysine; alternate modification. The residue at position 28 (Lys28) is an N6-acetyllysine; alternate. N6-crotonyllysine; alternate is present on Lys28. Lys28 is subject to N6-methyllysine; alternate. An N6-lactoyllysine; alternate modification is found at Lys28. Lys28 is modified (N6-glutaryllysine; alternate). Position 29 is an ADP-ribosylserine; alternate (Ser29). A Phosphoserine; alternate; by AURKB, AURKC and RPS6KA5 modification is found at Ser29. Lys37 is subject to N6,N6,N6-trimethyllysine; alternate. Lys37 is subject to N6,N6-dimethyllysine; alternate. An N6-(2-hydroxyisobutyryl)lysine; alternate modification is found at Lys37. Lys37 is modified (N6-acetyllysine; alternate). N6-methyllysine; alternate is present on Lys37. At Lys38 the chain carries N6-methyllysine. Tyr42 carries the post-translational modification Phosphotyrosine. An N6,N6,N6-trimethyllysine; alternate modification is found at Lys57. Lys57 carries the post-translational modification N6-(2-hydroxyisobutyryl)lysine; alternate. Lys57 is modified (N6-(beta-hydroxybutyryl)lysine; alternate). The residue at position 57 (Lys57) is an N6-acetyllysine; alternate. Lys57 carries the post-translational modification N6-crotonyllysine; alternate. Lys57 is modified (N6-lactoyllysine; alternate). Lys57 is modified (N6-glutaryllysine; alternate). An N6-succinyllysine; alternate modification is found at Lys57. Lys57 is subject to N6-methyllysine; by EHMT2; alternate. At Ser58 the chain carries Phosphoserine. An N6-(2-hydroxyisobutyryl)lysine; alternate mark is found at Lys65 and Lys80. N6-methyllysine; alternate occurs at positions 65 and 80. N6,N6,N6-trimethyllysine; alternate is present on Lys80. At Lys80 the chain carries N6,N6-dimethyllysine; alternate. An N6-(beta-hydroxybutyryl)lysine; alternate modification is found at Lys80. Lys80 is modified (N6-acetyllysine; alternate). Lys80 bears the N6-lactoyllysine; alternate mark. Lys80 carries the N6-glutaryllysine; alternate modification. N6-succinyllysine; alternate is present on Lys80. Thr81 bears the Phosphothreonine mark. Residue Ser87 is modified to Phosphoserine. The residue at position 108 (Thr108) is a Phosphothreonine. Residues Lys116 and Lys123 each carry the N6-acetyllysine; alternate modification. N6-glutaryllysine; alternate is present on residues Lys116 and Lys123. N6-(2-hydroxyisobutyryl)lysine; alternate is present on Lys123. Lys123 is modified (N6-(beta-hydroxybutyryl)lysine; alternate). Lys123 bears the N6-methyllysine; alternate mark. At Lys123 the chain carries N6-succinyllysine; alternate.

This sequence belongs to the histone H3 family. As to quaternary structure, the nucleosome is a histone octamer containing two molecules each of H2A, H2B, H3 and H4 assembled in one H3-H4 heterotetramer and two H2A-H2B heterodimers. The octamer wraps approximately 147 bp of DNA. Interacts with TONSL; CHAF1A; CHAF1B; MCM2 and DNAJC9. Interacts with NASP; NASP is a histone chaperone that stabilizes and maintains a soluble pool of Histone H3-H4 dimers. Acetylation is generally linked to gene activation. Acetylation on Lys-10 (H3K9ac) impairs methylation at Arg-9 (H3R8me2s). Acetylation on Lys-19 (H3K18ac) and Lys-24 (H3K24ac) favors methylation at Arg-18 (H3R17me). Acetylation at Lys-123 (H3K122ac) by EP300/p300 plays a central role in chromatin structure: localizes at the surface of the histone octamer and stimulates transcription, possibly by promoting nucleosome instability. Post-translationally, citrullination at Arg-9 (H3R8ci) and/or Arg-18 (H3R17ci) by PADI4 impairs methylation and represses transcription. In terms of processing, asymmetric dimethylation at Arg-18 (H3R17me2a) by CARM1 is linked to gene activation. Symmetric dimethylation at Arg-9 (H3R8me2s) by PRMT5 is linked to gene repression. Asymmetric dimethylation at Arg-3 (H3R2me2a) by PRMT6 is linked to gene repression and is mutually exclusive with H3 Lys-5 methylation (H3K4me2 and H3K4me3). H3R2me2a is present at the 3' of genes regardless of their transcription state and is enriched on inactive promoters, while it is absent on active promoters. Methylation at Lys-5 (H3K4me), Lys-37 (H3K36me) and Lys-80 (H3K79me) are linked to gene activation. Methylation at Lys-5 (H3K4me) facilitates subsequent acetylation of H3 and H4. Methylation at Lys-80 (H3K79me) is associated with DNA double-strand break (DSB) responses and is a specific target for TP53BP1. Methylation at Lys-10 (H3K9me) and Lys-28 (H3K27me) are linked to gene repression. Methylation at Lys-10 (H3K9me) is a specific target for HP1 proteins (CBX1, CBX3 and CBX5) and prevents subsequent phosphorylation at Ser-11 (H3S10ph) and acetylation of H3 and H4. Methylation at Lys-5 (H3K4me) and Lys-80 (H3K79me) require preliminary monoubiquitination of H2B at 'Lys-120'. Methylation at Lys-10 (H3K9me) and Lys-28 (H3K27me) are enriched in inactive X chromosome chromatin. Monomethylation at Lys-57 (H3K56me1) by EHMT2/G9A in G1 phase promotes interaction with PCNA and is required for DNA replication. Post-translationally, phosphorylated at Thr-4 (H3T3ph) by VRK1. Phosphorylated at Thr-4 (H3T3ph) by HASPIN during prophase and dephosphorylated during anaphase. Phosphorylation at Ser-11 (H3S10ph) by AURKB is crucial for chromosome condensation and cell-cycle progression during mitosis and meiosis. In addition phosphorylation at Ser-11 (H3S10ph) by RPS6KA4 and RPS6KA5 is important during interphase because it enables the transcription of genes following external stimulation, like mitogens, stress, growth factors or UV irradiation and result in the activation of genes, such as c-fos and c-jun. Phosphorylation at Ser-11 (H3S10ph), which is linked to gene activation, prevents methylation at Lys-10 (H3K9me) but facilitates acetylation of H3 and H4. Phosphorylation at Ser-11 (H3S10ph) by AURKB mediates the dissociation of HP1 proteins (CBX1, CBX3 and CBX5) from heterochromatin. Phosphorylation at Ser-11 (H3S10ph) is also an essential regulatory mechanism for neoplastic cell transformation. Phosphorylated at Ser-29 (H3S28ph) by MAP3K20 isoform 1, RPS6KA5 or AURKB during mitosis or upon ultraviolet B irradiation. Phosphorylation at Thr-7 (H3T6ph) by PRKCB is a specific tag for epigenetic transcriptional activation that prevents demethylation of Lys-5 (H3K4me) by LSD1/KDM1A. At centromeres, specifically phosphorylated at Thr-12 (H3T11ph) from prophase to early anaphase, by DAPK3 and PKN1. Phosphorylation at Thr-12 (H3T11ph) by PKN1 or isoform M2 of PKM (PKM2) is a specific tag for epigenetic transcriptional activation that promotes demethylation of Lys-10 (H3K9me) by KDM4C/JMJD2C. Phosphorylation at Thr-12 (H3T11ph) by chromatin-associated CHEK1 regulates the transcription of cell cycle regulatory genes by modulating acetylation of Lys-10 (H3K9ac). Phosphorylation at Tyr-42 (H3Y41ph) by JAK2 promotes exclusion of CBX5 (HP1 alpha) from chromatin. In terms of processing, monoubiquitinated by RAG1 in lymphoid cells, monoubiquitination is required for V(D)J recombination. Ubiquitinated by the CUL4-DDB-RBX1 complex in response to ultraviolet irradiation. This may weaken the interaction between histones and DNA and facilitate DNA accessibility to repair proteins. Lysine deamination at Lys-5 (H3K4all) to form allysine is mediated by LOXL2. Allysine formation by LOXL2 only takes place on H3K4me3 and results in gene repression. Post-translationally, crotonylation (Kcr) is specifically present in male germ cells and marks testis-specific genes in post-meiotic cells, including X-linked genes that escape sex chromosome inactivation in haploid cells. Crotonylation marks active promoters and enhancers and confers resistance to transcriptional repressors. It is also associated with post-meiotically activated genes on autosomes. In terms of processing, butyrylation of histones marks active promoters and competes with histone acetylation. It is present during late spermatogenesis. Succinylation at Lys-80 (H3K79succ) by KAT2A takes place with a maximum frequency around the transcription start sites of genes. It gives a specific tag for epigenetic transcription activation. Desuccinylation at Lys-123 (H3K122succ) by SIRT7 in response to DNA damage promotes chromatin condensation and double-strand breaks (DSBs) repair. Post-translationally, serine ADP-ribosylation by PARP1 or PARP2 constitutes the primary form of ADP-ribosylation of proteins in response to DNA damage. Serine ADP-ribosylation at Ser-11 (H3S10ADPr) promotes recruitment of CHD1L. H3S10ADPr is mutually exclusive with phosphorylation at Ser-11 (H3S10ph) and impairs acetylation at Lys-10 (H3K9ac). In terms of processing, serotonylated by TGM2 at Gln-6 (H3Q5ser) during serotonergic neuron differentiation. H3Q5ser is associated with trimethylation of Lys-5 (H3K4me3) and enhances general transcription factor IID (TFIID) complex-binding to H3K4me3, thereby facilitating transcription. Dopaminylated by TGM2 at Gln-6 (H3Q5dop) in ventral tegmental area (VTA) neurons. H3Q5dop mediates neurotransmission-independent role of nuclear dopamine by regulating relapse-related transcriptional plasticity in the reward system. Post-translationally, lactylated in macrophages by EP300/P300 by using lactoyl-CoA directly derived from endogenous or exogenous lactate, leading to stimulates gene transcription.

It localises to the nucleus. It is found in the chromosome. Its function is as follows. Core component of nucleosome. Nucleosomes wrap and compact DNA into chromatin, limiting DNA accessibility to the cellular machineries which require DNA as a template. Histones thereby play a central role in transcription regulation, DNA repair, DNA replication and chromosomal stability. DNA accessibility is regulated via a complex set of post-translational modifications of histones, also called histone code, and nucleosome remodeling. In Homo sapiens (Human), this protein is Histone H3.1.